Reading from the N-terminus, the 282-residue chain is MATYLIGDVHGCYDELIALLHKVEFTPGKDTLWLTGDLVARGPGSLDVLRYVKSLGDSVRLVLGNHDLHLLAVFAGISRNKPKDRLTPLLEAPDADELLNWLRRQPLLQIDEEKKLVMAHAGITPQWDLQTAKECARDVEAVLSSDSYPFFLDAMYGDMPNNWSPELRGLGRLRFITNAFTRMRFCFPNGQLDMYSKESPEEAPAPLKPWFAIPGPVAEEYNIAFGHWASLEGKGTPEGIYALDTGCCWGGTLTCLRWEDKQYFVQPSNRHKDMGEGEAVAS.

This sequence belongs to the Ap4A hydrolase family.

The enzyme catalyses P(1),P(4)-bis(5'-adenosyl) tetraphosphate + H2O = 2 ADP + 2 H(+). Its function is as follows. Hydrolyzes diadenosine 5',5'''-P1,P4-tetraphosphate to yield ADP. This chain is Bis(5'-nucleosyl)-tetraphosphatase, symmetrical, found in Escherichia coli O127:H6 (strain E2348/69 / EPEC).